A 164-amino-acid polypeptide reads, in one-letter code: MRFSISALVLGLAATVYALPPGAPSAGGAGSGNGVGNKGNTDVRFSVPDNMTVKQAQAECGDQAQLSCCNKAVYAGDTTDINSGILGGTLSNLIGSGSGASGLGLFDQCSKLDLQIPVLIGIPIQDLINQKCKQNIACCQNSPSSANSDLIGLGLPCVALGSIL.

The signal sequence occupies residues 1–18 (MRFSISALVLGLAATVYA). N-linked (GlcNAc...) asparagine glycosylation is present at Asn-50. 4 disulfides stabilise this stretch: Cys-60–Cys-138, Cys-68–Cys-132, Cys-69–Cys-109, and Cys-139–Cys-157.

It belongs to the fungal hydrophobin family. As to quaternary structure, self-assembles to form functional amyloid fibrils called rodlets. Self-assembly into fibrillar rodlets occurs spontaneously at hydrophobic:hydrophilic interfaces and the rodlets further associate laterally to form amphipathic monolayers.

It localises to the secreted. The protein localises to the cell wall. Its function is as follows. Aerial growth, conidiation, and dispersal of filamentous fungi in the environment rely upon a capability of their secreting small amphipathic proteins called hydrophobins (HPBs) with low sequence identity. Class I can self-assemble into an outermost layer of rodlet bundles on aerial cell surfaces, conferring cellular hydrophobicity that supports fungal growth, development and dispersal; whereas Class II form highly ordered films at water-air interfaces through intermolecular interactions but contribute nothing to the rodlet structure. RodA is a class I hydrophobin involved in the cell surface hydrophobicity and conidiation under aerial conditions. The surface rodlet layer of the conidial cell wall makes airborne conidia of filamentous fungi inert to both innate and adaptive immunity. The sequence is that of Class I hydrophobin rodA from Penicillium camembertii.